A 348-amino-acid chain; its full sequence is LIM domain-containing protein unc-97 (348 aa).

LIM zinc-binding domains follow at residues 21-73 (CVRC…CEHD), 82-132 (CGKC…CREC), 146-196 (CHKC…CLRC), 205-255 (CGAC…CEQH), and 264-315 (CFKC…CKRC).

In terms of assembly, interacts with unc-98. Component of an integrin containing attachment complex, composed of at least pat-2, pat-3, pat-4, pat-6, unc-52, unc-97 and unc-112. As to expression, restricted to tissue types that attach to the hypodermis, specifically body wall muscles, vulval muscles, and mechanosensory neurons.

It is found in the cell junction. It localises to the adherens junction. Its subcellular location is the nucleus. In terms of biological role, component of an integrin containing attachment complex, which is required for muscle development and maintenance. Probably function in adherens junction. Affects the structural integrity of the integrin containing muscle adherens junctions and contributes to the mechanosensory functions of touch neurons. The chain is LIM domain-containing protein unc-97 from Caenorhabditis elegans.